An 89-amino-acid polypeptide reads, in one-letter code: Small ribosomal subunit protein uS15 (89 aa).

Belongs to the universal ribosomal protein uS15 family. Part of the 30S ribosomal subunit. Forms a bridge to the 50S subunit in the 70S ribosome, contacting the 23S rRNA.

Functionally, one of the primary rRNA binding proteins, it binds directly to 16S rRNA where it helps nucleate assembly of the platform of the 30S subunit by binding and bridging several RNA helices of the 16S rRNA. Forms an intersubunit bridge (bridge B4) with the 23S rRNA of the 50S subunit in the ribosome. The sequence is that of Small ribosomal subunit protein uS15 from Prochlorococcus marinus (strain MIT 9215).